A 184-amino-acid chain; its full sequence is GTP cyclohydrolase 1 (184 aa).

The Zn(2+) site is built by Cys-75, His-78, and Cys-146.

It belongs to the GTP cyclohydrolase I family. In terms of assembly, homomer.

It catalyses the reaction GTP + H2O = 7,8-dihydroneopterin 3'-triphosphate + formate + H(+). It participates in cofactor biosynthesis; 7,8-dihydroneopterin triphosphate biosynthesis; 7,8-dihydroneopterin triphosphate from GTP: step 1/1. The polypeptide is GTP cyclohydrolase 1 (Streptococcus pneumoniae (strain ATCC 700669 / Spain 23F-1)).